We begin with the raw amino-acid sequence, 35 residues long: Photosystem II reaction center protein Y (35 aa).

Topologically, residues 1 to 4 (MDTR) are lumenal. The chain crosses the membrane as a helical span at residues 5-23 (LLIVLLPIIAAASWAIYNI). At 24–35 (GKILLLQLTKRS) the chain is on the stromal side.

The protein belongs to the PsbY family. In terms of assembly, PSII is composed of 1 copy each of membrane proteins PsbA, PsbB, PsbC, PsbD, PsbE, PsbF, PsbH, PsbI, PsbJ, PsbK, PsbL, PsbM, PsbT, PsbX, PsbY, PsbZ, Psb30/Ycf12, at least 3 peripheral proteins of the oxygen-evolving complex and a large number of cofactors. It forms dimeric complexes.

It localises to the plastid. It is found in the chloroplast thylakoid membrane. Loosely associated component of the core of photosystem II (PSII), it is not always seen in crystals. PSII is a light-driven water plastoquinone oxidoreductase, using light energy to abstract electrons from H(2)O, generating a proton gradient subsequently used for ATP formation. This is Photosystem II reaction center protein Y from Cyanidioschyzon merolae (strain NIES-3377 / 10D) (Unicellular red alga).